The primary structure comprises 180 residues: ATP synthase subunit delta (180 aa).

The protein belongs to the ATPase delta chain family. F-type ATPases have 2 components, F(1) - the catalytic core - and F(0) - the membrane proton channel. F(1) has five subunits: alpha(3), beta(3), gamma(1), delta(1), epsilon(1). F(0) has three main subunits: a(1), b(2) and c(10-14). The alpha and beta chains form an alternating ring which encloses part of the gamma chain. F(1) is attached to F(0) by a central stalk formed by the gamma and epsilon chains, while a peripheral stalk is formed by the delta and b chains.

The protein resides in the cell membrane. In terms of biological role, f(1)F(0) ATP synthase produces ATP from ADP in the presence of a proton or sodium gradient. F-type ATPases consist of two structural domains, F(1) containing the extramembraneous catalytic core and F(0) containing the membrane proton channel, linked together by a central stalk and a peripheral stalk. During catalysis, ATP synthesis in the catalytic domain of F(1) is coupled via a rotary mechanism of the central stalk subunits to proton translocation. This protein is part of the stalk that links CF(0) to CF(1). It either transmits conformational changes from CF(0) to CF(1) or is implicated in proton conduction. This is ATP synthase subunit delta from Alkaliphilus oremlandii (strain OhILAs) (Clostridium oremlandii (strain OhILAs)).